The following is a 313-amino-acid chain: 2,3-dihydroxyphenylpropionate/2,3-dihydroxicinnamic acid 1,2-dioxygenase (313 aa).

The active-site Proton donor is the H115. H179 (proton acceptor) is an active-site residue.

It belongs to the LigB/MhpB extradiol dioxygenase family. As to quaternary structure, homotetramer. Fe(2+) serves as cofactor.

The enzyme catalyses 3-(2,3-dihydroxyphenyl)propanoate + O2 = (2Z,4E)-2-hydroxy-6-oxonona-2,4-dienedioate + H(+). The catalysed reaction is (2E)-3-(2,3-dihydroxyphenyl)prop-2-enoate + O2 = (2Z,4E,7E)-2-hydroxy-6-oxonona-2,4,7-trienedioate + H(+). It functions in the pathway aromatic compound metabolism; 3-phenylpropanoate degradation. Its function is as follows. Catalyzes the non-heme iron(II)-dependent oxidative cleavage of 2,3-dihydroxyphenylpropionic acid and 2,3-dihydroxicinnamic acid into 2-hydroxy-6-ketononadienedioate and 2-hydroxy-6-ketononatrienedioate, respectively. This chain is 2,3-dihydroxyphenylpropionate/2,3-dihydroxicinnamic acid 1,2-dioxygenase, found in Xanthobacter autotrophicus (strain ATCC BAA-1158 / Py2).